The chain runs to 900 residues: Protein translocase subunit SecA (900 aa).

ATP-binding positions include glutamine 87, 105-109 (GEGKT), and aspartate 512. Residues 849-900 (ERLAQQQQFSHQEEDSLNTGSPAQADRKIGRNDPCPCGSGKKYKQCHGRLQK) are disordered. Cysteine 883, cysteine 885, cysteine 894, and histidine 895 together coordinate Zn(2+). Over residues 889-900 (KKYKQCHGRLQK) the composition is skewed to basic residues.

The protein belongs to the SecA family. Monomer and homodimer. Part of the essential Sec protein translocation apparatus which comprises SecA, SecYEG and auxiliary proteins SecDF-YajC and YidC. It depends on Zn(2+) as a cofactor.

It localises to the cell inner membrane. The protein localises to the cytoplasm. It carries out the reaction ATP + H2O + cellular proteinSide 1 = ADP + phosphate + cellular proteinSide 2.. Functionally, part of the Sec protein translocase complex. Interacts with the SecYEG preprotein conducting channel. Has a central role in coupling the hydrolysis of ATP to the transfer of proteins into and across the cell membrane, serving both as a receptor for the preprotein-SecB complex and as an ATP-driven molecular motor driving the stepwise translocation of polypeptide chains across the membrane. This is Protein translocase subunit SecA from Pectobacterium atrosepticum (strain SCRI 1043 / ATCC BAA-672) (Erwinia carotovora subsp. atroseptica).